Consider the following 855-residue polypeptide: Protein KRI1 homolog (855 aa).

Disordered regions lie at residues 47 to 67 (VSES…VDPK), 82 to 117 (KDPC…KAKP), 130 to 196 (EHNG…KTKE), 312 to 342 (SLRR…MKEL), 424 to 453 (YDPR…CDYD), and 589 to 855 (KSLY…KKDN). Acidic residues predominate over residues 48–64 (SESEFDSDSSSSEEDEV). Basic and acidic residues predominate over residues 82 to 91 (KDPCIYDKGT). Phosphoserine occurs at positions 95, 97, 98, 137, and 138. Over residues 160–176 (EEERRLKAEFRKVMNKE) the composition is skewed to basic and acidic residues. Serine 179 is modified (phosphoserine). The stretch at 307–362 (RTIEQSLRRTDDKRKEKRKELKERKDQEKQQKMKELELVKEMKRKEIDEKIRKLKA) forms a coiled coil. Over residues 441–452 (CEDDDFNMDCDY) the composition is skewed to acidic residues. Over residues 609–619 (VTPAEATAPAE) the composition is skewed to low complexity. Over residues 630 to 640 (KSKRKRLKRKA) the composition is skewed to basic residues. Basic and acidic residues-rich tracts occupy residues 650 to 664 (VLKE…KEAD) and 674 to 692 (SSKK…DANQ). Polar residues-rich tracts occupy residues 720 to 748 (VQNG…TTES), 756 to 773 (SNGN…QQRQ), and 792 to 805 (ANGT…NQKP). The segment covering 812-826 (KKTNNFKAKNKQNNN) has biased composition (low complexity). A compositionally biased stretch (basic residues) spans 842–855 (RKFHKREKYGKKDN).

This sequence belongs to the KRI1 family.

This chain is Protein KRI1 homolog, found in Drosophila melanogaster (Fruit fly).